The primary structure comprises 434 residues: MSVTRLSEPLQNILLQDLRNFYDRASRIATLSVSAIAAIKSAWTRGSPFAAATALYPTNEEGKYVIQAEGIRMEFTNYGGAVTNLWLNNSRGEEVDIVLGLDHARDYEDYPKNPYLNGAIGRYAGFMRGGRFDMDGESYQVATNAHNGSSTFNGGDRGWGRSILDIGSHTENSITFVLFDRSWNGFPGTAASCLTHTVTPYEWRVAFGVTPTKKPGPINMSQQAFFNLDGFKKKNLTGSVPVSDKTVRDHKLHLPLSGLRFETDALGLSTGDILGNPRGSEYDFWSASRRIGDVLEKPYMGICDRCQKRQYHNHNPSGAYDTIFQLGRSQPWNKEDVPAAILSSPESGISMKLYSDQEALHVHTWSQKEFPLKLKKGQGQGMVPQHGGISFEMQDWPDGLNHPEWRRESKTIWGMDGLYTAFSSYRFSVDKTEP.

125 to 126 (GF) lines the substrate pocket. The active-site Proton acceptor is the glutamate 392.

The protein belongs to the aldose epimerase family. In terms of assembly, monomer.

The protein operates within secondary metabolite biosynthesis. In terms of biological role, epimerase; part of the gene cluster that mediates the biosynthesis of fusarielins F, G and H, decaketide compounds with 5 methylations and a decaline core that act as mycoestrogens as they stimulate growth of MCF-7 breast cancer cells. The initial compound in the pathway is produced by the reducing polyketide synthase FSL1. FSL1 lacks an active enoyl reductase (ER) domain and biosynthesis of fusarielins relies on the trans-acting enoyl reductase FSL5, before it is released through hydrolysis catalyzed by the thioesterase FSL2. Fusarielins F, G, and H have a C11=C12 cis double bond and is fully reduced between C10 and C11 and between C12 and C13. FSL3 can be involved in the formation of the C11=C12 cis double bond by moving a hypothetical C10=C11 or C12=C13 trans double bond to form prefusarielin. Prefusarielin is oxygenated at C15 and C16 by the cytochrome P450 monooxygenase FSL4, resulting in fusarielin F, which subsequently is epoxidized into fusarielin G by the same enzyme. The final step in the pathway is a reduction of the carboxylic acid moiety to yield fusarielin H via a still undetermined mechanism. The polypeptide is Epimerase FSL3 (Gibberella zeae (strain ATCC MYA-4620 / CBS 123657 / FGSC 9075 / NRRL 31084 / PH-1) (Wheat head blight fungus)).